Here is a 129-residue protein sequence, read N- to C-terminus: Small ribosomal subunit protein uS12 (129 aa).

At Asp-89 the chain carries 3-methylthioaspartic acid.

This sequence belongs to the universal ribosomal protein uS12 family. Part of the 30S ribosomal subunit. Contacts proteins S8 and S17. May interact with IF1 in the 30S initiation complex.

Its function is as follows. With S4 and S5 plays an important role in translational accuracy. Interacts with and stabilizes bases of the 16S rRNA that are involved in tRNA selection in the A site and with the mRNA backbone. Located at the interface of the 30S and 50S subunits, it traverses the body of the 30S subunit contacting proteins on the other side and probably holding the rRNA structure together. The combined cluster of proteins S8, S12 and S17 appears to hold together the shoulder and platform of the 30S subunit. The polypeptide is Small ribosomal subunit protein uS12 (Rickettsia akari (strain Hartford)).